The following is a 361-amino-acid chain: GTP 3',8-cyclase (361 aa).

Residues 1-30 are disordered; it reads MTVTALGLPTVARSTGDGSAGASPAPADGP. Over residues 16 to 30 the composition is skewed to low complexity; sequence GDGSAGASPAPADGP. A Radical SAM core domain is found at 34–252; the sequence is TYGRAATDLR…LQQHFELTPD (219 aa). Arg43 is a binding site for GTP. [4Fe-4S] cluster is bound by residues Cys50 and Cys54. Tyr56 is a binding site for S-adenosyl-L-methionine. Cys57 contacts [4Fe-4S] cluster. Arg94 contacts GTP. Gly98 is an S-adenosyl-L-methionine binding site. Residue Thr125 coordinates GTP. Ser149 provides a ligand contact to S-adenosyl-L-methionine. Lys186 provides a ligand contact to GTP. Met220 contacts S-adenosyl-L-methionine. [4Fe-4S] cluster is bound by residues Cys288 and Cys291. A GTP-binding site is contributed by 293-295; it reads RTR. Cys305 contributes to the [4Fe-4S] cluster binding site.

The protein belongs to the radical SAM superfamily. MoaA family. As to quaternary structure, monomer and homodimer. [4Fe-4S] cluster is required as a cofactor.

The catalysed reaction is GTP + AH2 + S-adenosyl-L-methionine = (8S)-3',8-cyclo-7,8-dihydroguanosine 5'-triphosphate + 5'-deoxyadenosine + L-methionine + A + H(+). It functions in the pathway cofactor biosynthesis; molybdopterin biosynthesis. In terms of biological role, catalyzes the cyclization of GTP to (8S)-3',8-cyclo-7,8-dihydroguanosine 5'-triphosphate. This is GTP 3',8-cyclase from Mycolicibacterium smegmatis (strain ATCC 700084 / mc(2)155) (Mycobacterium smegmatis).